The sequence spans 275 residues: Lycopene elongase/hydratase (275 aa).

Helical transmembrane passes span 13-33 (FWLY…TTVG), 38-58 (APAV…LYGI), 84-104 (AAVA…AAPL), 107-127 (EAWP…APPL), 134-154 (VLDS…YAGV), 160-180 (PLLA…FSAI), 203-223 (ALAY…LVDV), 225-245 (FGLL…LQVA), and 253-273 (YPAV…WGVV).

This sequence belongs to the UbiA prenyltransferase family.

It localises to the cell membrane. The enzyme catalyses all-trans-lycopene + dimethylallyl diphosphate + H2O = dihydroisopentenyldehydrorhodopin + diphosphate. It carries out the reaction isopentenyldehydrorhodopin + dimethylallyl diphosphate + H2O = dihydrobisanhydrobacterioruberin + diphosphate. It participates in carotenoid biosynthesis. Inhibited by bacterioopsin. Functionally, involved in the biosynthesis of the acyclic C50 carotenoid bacterioruberin (BR). Acts as a bifunctional elongase/hydratase that catalyzes the elongation of lycopene by attaching a C(5) isoprene unit at C-2, as well as the hydroxylation of the previous end of the molecule. The enzyme acts at both ends of the substrate, and catalyzes the conversion of lycopene to the C(45) intermediate dihydroisopentenyldehydrorhodopin (DH-IDR) and the conversion of isopentenyldehydrorhodopin (IDR) to the C(50) carotenoid dihydrobisanhydrobacterioruberin (DH-BABR). Can also catalyze the conversion of lycopene to tetrahydrobisanhydrobacterioruberin (TH-BABR). This chain is Lycopene elongase/hydratase, found in Halobacterium salinarum (strain ATCC 700922 / JCM 11081 / NRC-1) (Halobacterium halobium).